We begin with the raw amino-acid sequence, 207 residues long: Outer-membrane lipoprotein LolB (207 aa).

The signal sequence occupies residues 1 to 21 (MTLPDFRLIRLLPLASLVLTA). The N-palmitoyl cysteine moiety is linked to residue cysteine 22. Cysteine 22 is lipidated: S-diacylglycerol cysteine.

The protein belongs to the LolB family. As to quaternary structure, monomer.

The protein resides in the cell outer membrane. Plays a critical role in the incorporation of lipoproteins in the outer membrane after they are released by the LolA protein. In Salmonella typhi, this protein is Outer-membrane lipoprotein LolB.